The following is a 404-amino-acid chain: MKRTIIMMLDSFGVGASADAASFGDVGSDTFGHIAKACAEGKADIGREGPLKLPNLARLGLGHAAMESTGAFAPGFGDNVELIGAYGHAQELSSGKDTPSGHWEMAGVPVLFEWGYFSEHQNSFPKELTDKILARAGLDGFLGNCHASGTTILEELGEEHMRSGKPIFYTSADSVFQIACHEETFGLDNLYRLCAITREELEPYNIGRVIARPFDGTGSSDFARTGNRKDYSLAPPAKTVLDKLNEAGGEVVSVGKIADIYAYCGITKKVKANGLEALFDATLAEVKSAGDNTIVFTNFVDFDSHYGHRRDVAGYAKGLEYFDARLPEMLALLGEDDLLILTADHGCDPTWQGTDHTREYVPVLAFGAGLKAGSLGRRKSFADIGQSIASHFKLEPMAYGESFL.

Residues Asp-10, Asp-303, His-308, Asp-344, His-345, and His-356 each contribute to the Mn(2+) site.

Belongs to the phosphopentomutase family. Requires Mn(2+) as cofactor.

It is found in the cytoplasm. The catalysed reaction is 2-deoxy-alpha-D-ribose 1-phosphate = 2-deoxy-D-ribose 5-phosphate. It carries out the reaction alpha-D-ribose 1-phosphate = D-ribose 5-phosphate. It functions in the pathway carbohydrate degradation; 2-deoxy-D-ribose 1-phosphate degradation; D-glyceraldehyde 3-phosphate and acetaldehyde from 2-deoxy-alpha-D-ribose 1-phosphate: step 1/2. Isomerase that catalyzes the conversion of deoxy-ribose 1-phosphate (dRib-1-P) and ribose 1-phosphate (Rib-1-P) to deoxy-ribose 5-phosphate (dRib-5-P) and ribose 5-phosphate (Rib-5-P), respectively. This chain is Phosphopentomutase, found in Shewanella baltica (strain OS223).